The primary structure comprises 473 residues: Catalase easC (473 aa).

Positions 1–15 (MASEVSVASSGSEHS) are enriched in low complexity. The interval 1 to 31 (MASEVSVASSGSEHSGAQKCPFQDPGLSSMD) is disordered. H54 is a catalytic residue. Y344 is a binding site for heme. Residues 352-389 (LGPNNLDLPANRTKKLADGSRPEKAEMAPQKVPSQEHA) form a disordered region. The segment covering 366-377 (KLADGSRPEKAE) has biased composition (basic and acidic residues).

Belongs to the catalase family. It depends on heme as a cofactor.

It participates in alkaloid biosynthesis; ergot alkaloid biosynthesis. Its function is as follows. Catalase; part of the gene cluster that mediates the biosynthesis of fungal ergot alkaloid. DmaW catalyzes the first step of ergot alkaloid biosynthesis by condensing dimethylallyl diphosphate (DMAP) and tryptophan to form 4-dimethylallyl-L-tryptophan. The second step is catalyzed by the methyltransferase easF that methylates 4-dimethylallyl-L-tryptophan in the presence of S-adenosyl-L-methionine, resulting in the formation of 4-dimethylallyl-L-abrine. The catalase easC and the FAD-dependent oxidoreductase easE then transform 4-dimethylallyl-L-abrine to chanoclavine-I which is further oxidized by easD in the presence of NAD(+), resulting in the formation of chanoclavine-I aldehyde. Agroclavine dehydrogenase easG then mediates the conversion of chanoclavine-I aldehyde to agroclavine via a non-enzymatic adduct reaction: the substrate is an iminium intermediate that is formed spontaneously from chanoclavine-I aldehyde in the presence of glutathione. The presence of easA is not required to complete this reaction. Further conversion of agroclavine to paspalic acid is a two-step process involving oxidation of agroclavine to elymoclavine and of elymoclavine to paspalic acid, the second step being performed by the elymoclavine oxidase cloA. Paspalic acid is then further converted to D-lysergic acid. Ergopeptines are assembled from D-lysergic acid and three different amino acids by the D-lysergyl-peptide-synthetases composed each of a monomudular and a trimodular nonribosomal peptide synthetase subunit. LpsB and lpsC encode the monomodular subunits responsible for D-lysergic acid activation and incorporation into the ergopeptine backbone. LpsA1 and A2 subunits encode the trimodular nonribosomal peptide synthetase assembling the tripeptide portion of ergopeptines. LpsA1 is responsible for formation of the major ergopeptine, ergotamine, and lpsA2 for alpha-ergocryptine, the minor ergopeptine of the total alkaloid mixture elaborated by C.purpurea. D-lysergyl-tripeptides are assembled by the nonribosomal peptide synthetases and released as N-(D-lysergyl-aminoacyl)-lactams. Cyclolization of the D-lysergyl-tripeptides is performed by the Fe(2+)/2-ketoglutarate-dependent dioxygenase easH which introduces a hydroxyl group into N-(D-lysergyl-aminoacyl)-lactam at alpha-C of the aminoacyl residue followed by spontaneous condensation with the terminal lactam carbonyl group. This chain is Catalase easC, found in Claviceps purpurea (strain 20.1) (Ergot fungus).